Here is a 304-residue protein sequence, read N- to C-terminus: MVCVLIPATSANLGPGFDAVGMALSFYNEVSLGPSPKELEIEVFGDGAELISRDKNNLVYVAITKIFERLGKTPRNLKLTLKNRVPLARGLGSSAAAIVGGLVAANAYLGNPLPKDELLRLATELEGHPDNVAPALLGGVVVSGFDRDKVKYLKLPVPEVEVVVAIPKFQLKTADSRQILPAEIPFSQAVLNVNRVSFLIAAFCLKKYEYLQIGMEDYLHQPYRSQLIPGFYQVVEEAKKAGAYGVALSGSGPTVIALAREGKAVGRAIEETFLNFGVEAEIIYTRPEERGAIDLINYKGEGDC.

86–96 (PLARGLGSSAA) contacts ATP.

Belongs to the GHMP kinase family. Homoserine kinase subfamily.

It localises to the cytoplasm. The catalysed reaction is L-homoserine + ATP = O-phospho-L-homoserine + ADP + H(+). Its pathway is amino-acid biosynthesis; L-threonine biosynthesis; L-threonine from L-aspartate: step 4/5. Functionally, catalyzes the ATP-dependent phosphorylation of L-homoserine to L-homoserine phosphate. This Carboxydothermus hydrogenoformans (strain ATCC BAA-161 / DSM 6008 / Z-2901) protein is Homoserine kinase.